The following is a 447-amino-acid chain: UDP-glucosyl transferase 79T1 (447 aa).

His-18 serves as the catalytic Proton acceptor. The Charge relay role is filled by Asp-116. Residues Ser-265, Trp-323, Val-324, His-341, Thr-346, and Glu-349 each coordinate UDP.

This sequence belongs to the UDP-glycosyltransferase family. In terms of tissue distribution, mainly expressed in flowers, flower buds and young leaves, and, to a lesser extent, in old leaves, stems and roots.

Its pathway is secondary metabolite biosynthesis; terpenoid biosynthesis. In terms of biological role, component of the oleanane-type triterpene saponins (e.g. saponarioside A and saponarioside B) biosynthetic pathway, leading to the production of natural products with detergent properties used as traditional sources of soap. A glycosyltransferase that mediates the conversion of QA-triF to QA-triFR via the elongation of the C-28 sugar chain with a deoxyhexose on the D-fucose moiety. The sequence is that of UDP-glucosyl transferase 79T1 from Saponaria officinalis (Common soapwort).